The primary structure comprises 428 residues: Enolase (428 aa).

Glutamine 163 lines the (2R)-2-phosphoglycerate pocket. The Proton donor role is filled by glutamate 205. Residues aspartate 242, glutamate 285, and aspartate 312 each contribute to the Mg(2+) site. Residues lysine 337, arginine 366, serine 367, and lysine 388 each contribute to the (2R)-2-phosphoglycerate site. Lysine 337 serves as the catalytic Proton acceptor.

It belongs to the enolase family. Requires Mg(2+) as cofactor.

The protein resides in the cytoplasm. Its subcellular location is the secreted. It localises to the cell surface. The enzyme catalyses (2R)-2-phosphoglycerate = phosphoenolpyruvate + H2O. It participates in carbohydrate degradation; glycolysis; pyruvate from D-glyceraldehyde 3-phosphate: step 4/5. Catalyzes the reversible conversion of 2-phosphoglycerate (2-PG) into phosphoenolpyruvate (PEP). It is essential for the degradation of carbohydrates via glycolysis. The polypeptide is Enolase (Neisseria meningitidis serogroup A / serotype 4A (strain DSM 15465 / Z2491)).